Reading from the N-terminus, the 150-residue chain is Large ribosomal subunit protein bL9 (150 aa).

It belongs to the bacterial ribosomal protein bL9 family.

Its function is as follows. Binds to the 23S rRNA. The protein is Large ribosomal subunit protein bL9 of Buchnera aphidicola subsp. Acyrthosiphon pisum (strain 5A).